Reading from the N-terminus, the 155-residue chain is Ribonuclease H (155 aa).

An RNase H type-1 domain is found at 1–142 (MLKQVEIFTD…CDVLARDAAS (142 aa)). Mg(2+) contacts are provided by Asp10, Glu48, Asp70, and Asp134.

The protein belongs to the RNase H family. As to quaternary structure, monomer. It depends on Mg(2+) as a cofactor.

Its subcellular location is the cytoplasm. The catalysed reaction is Endonucleolytic cleavage to 5'-phosphomonoester.. Functionally, endonuclease that specifically degrades the RNA of RNA-DNA hybrids. The chain is Ribonuclease H from Serratia proteamaculans (strain 568).